An 842-amino-acid polypeptide reads, in one-letter code: Translation initiation factor IF-2 (842 aa).

Disordered regions lie at residues 1–41 (MVAK…GFPD) and 112–219 (RPNR…QTYQ). 2 stretches are compositionally biased toward basic and acidic residues: residues 32–41 (PEDKKQGFPD) and 153–165 (RRGE…RDFS). One can recognise a tr-type G domain in the interval 328-497 (ARPPVVTVMG…MLQAEVMELR (170 aa)). The segment at 337–344 (GHVDHGKT) is G1. Residue 337–344 (GHVDHGKT) participates in GTP binding. Positions 362 to 366 (GITQH) are G2. The segment at 383–386 (DTPG) is G3. Residues 383 to 387 (DTPGH) and 437 to 440 (NKID) each bind GTP. The G4 stretch occupies residues 437 to 440 (NKID). Residues 473-475 (SAL) form a G5 region.

The protein belongs to the TRAFAC class translation factor GTPase superfamily. Classic translation factor GTPase family. IF-2 subfamily.

The protein resides in the cytoplasm. In terms of biological role, one of the essential components for the initiation of protein synthesis. Protects formylmethionyl-tRNA from spontaneous hydrolysis and promotes its binding to the 30S ribosomal subunits. Also involved in the hydrolysis of GTP during the formation of the 70S ribosomal complex. The protein is Translation initiation factor IF-2 (infB) of Treponema pallidum (strain Nichols).